The chain runs to 136 residues: uncharacterized protein (136 aa).

This is an uncharacterized protein from Mycoplasma pneumoniae (strain ATCC 29342 / M129 / Subtype 1) (Mycoplasmoides pneumoniae).